The primary structure comprises 297 residues: Ribosomal RNA small subunit methyltransferase H (297 aa).

S-adenosyl-L-methionine-binding positions include 34-36 (GGH), Asp-54, Phe-81, Asp-99, and Gln-106.

Belongs to the methyltransferase superfamily. RsmH family.

The protein localises to the cytoplasm. The enzyme catalyses cytidine(1402) in 16S rRNA + S-adenosyl-L-methionine = N(4)-methylcytidine(1402) in 16S rRNA + S-adenosyl-L-homocysteine + H(+). In terms of biological role, specifically methylates the N4 position of cytidine in position 1402 (C1402) of 16S rRNA. The sequence is that of Ribosomal RNA small subunit methyltransferase H from Chlamydia pneumoniae (Chlamydophila pneumoniae).